The sequence spans 279 residues: MKKEKNFFHLYMVSDATGETLISAGKAVASQYPTIQPIEHIYPMIRNKTQLQRVLDEIQREPGIVLYTIIDQEIKQLLSRECTKIGVPCAAVLDPVLNVFQSYLGTPKNLRVSAQHDLNTDYFRRIEALDFTIEHDDGQSSDDLFNADVILVGISRTSKTPTSIYLANRGIKTANVPLIPGIDLPKALLEEKNSLIIGLIASAERISHVRQNRELGKDVSIERYTDRVNIAEELTYAKRICERFGWPIIDVTRRSIEETAAAVFELLSRFREEKLREIL.

153–160 is an ADP binding site; that stretch reads GISRTSKT.

Belongs to the pyruvate, phosphate/water dikinase regulatory protein family. PDRP subfamily.

The catalysed reaction is N(tele)-phospho-L-histidyl/L-threonyl-[pyruvate, phosphate dikinase] + ADP = N(tele)-phospho-L-histidyl/O-phospho-L-threonyl-[pyruvate, phosphate dikinase] + AMP + H(+). The enzyme catalyses N(tele)-phospho-L-histidyl/O-phospho-L-threonyl-[pyruvate, phosphate dikinase] + phosphate + H(+) = N(tele)-phospho-L-histidyl/L-threonyl-[pyruvate, phosphate dikinase] + diphosphate. In terms of biological role, bifunctional serine/threonine kinase and phosphorylase involved in the regulation of the pyruvate, phosphate dikinase (PPDK) by catalyzing its phosphorylation/dephosphorylation. This chain is Putative pyruvate, phosphate dikinase regulatory protein, found in Bartonella bacilliformis (strain ATCC 35685 / KC583 / Herrer 020/F12,63).